The sequence spans 468 residues: POC1 centriolar protein homolog B (468 aa).

7 WD repeats span residues 16 to 55 (GHKD…RAYK), 58 to 97 (GHKE…ESTV), 100 to 139 (AHTA…FLFS), 142 to 181 (QHTN…CINT), 184 to 223 (DYKG…LLQH), 226 to 265 (VHNA…LIYT), and 268 to 307 (GHQG…YSVK). A coiled-coil region spans residues 420-459 (NTLEQIVDQLNVLTQTVSILEHRLTLTEDKLKECLENQQK).

Belongs to the WD repeat POC1 family. Interacts with pat. Highly expressed in ovary and, at low levels, in testis.

It is found in the cytoplasm. It localises to the cytoskeleton. Its subcellular location is the microtubule organizing center. The protein resides in the centrosome. The protein localises to the centriole. Its function is as follows. Plays an important role in centriole assembly and/or stability and ciliogenesis. Involved in early steps of centriole duplication, as well as in the later steps of centriole length control. The sequence is that of POC1 centriolar protein homolog B (poc1b) from Xenopus laevis (African clawed frog).